We begin with the raw amino-acid sequence, 346 residues long: Phosphate acyltransferase (346 aa).

The protein belongs to the PlsX family. In terms of assembly, homodimer. Probably interacts with PlsY.

The protein resides in the cytoplasm. It catalyses the reaction a fatty acyl-[ACP] + phosphate = an acyl phosphate + holo-[ACP]. It participates in lipid metabolism; phospholipid metabolism. Its function is as follows. Catalyzes the reversible formation of acyl-phosphate (acyl-PO(4)) from acyl-[acyl-carrier-protein] (acyl-ACP). This enzyme utilizes acyl-ACP as fatty acyl donor, but not acyl-CoA. The chain is Phosphate acyltransferase from Pelobacter propionicus (strain DSM 2379 / NBRC 103807 / OttBd1).